Here is a 20-residue protein sequence, read N- to C-terminus: Isocitrate dehydrogenase [NADP] (20 aa).

It belongs to the isocitrate and isopropylmalate dehydrogenases family. Mn(2+) is required as a cofactor. Mg(2+) serves as cofactor.

The protein localises to the cytoplasm. The enzyme catalyses D-threo-isocitrate + NADP(+) = 2-oxoglutarate + CO2 + NADPH. The chain is Isocitrate dehydrogenase [NADP] from Naegleria fowleri (Brain eating amoeba).